Here is a 360-residue protein sequence, read N- to C-terminus: UDP-N-acetylglucosamine--N-acetylmuramyl-(pentapeptide) pyrophosphoryl-undecaprenol N-acetylglucosamine transferase (360 aa).

Residues 11 to 13 (TGG), Asn-120, Arg-161, Ser-188, and Gln-282 contribute to the UDP-N-acetyl-alpha-D-glucosamine site.

Belongs to the glycosyltransferase 28 family. MurG subfamily.

It localises to the cell inner membrane. The catalysed reaction is di-trans,octa-cis-undecaprenyl diphospho-N-acetyl-alpha-D-muramoyl-L-alanyl-D-glutamyl-meso-2,6-diaminopimeloyl-D-alanyl-D-alanine + UDP-N-acetyl-alpha-D-glucosamine = di-trans,octa-cis-undecaprenyl diphospho-[N-acetyl-alpha-D-glucosaminyl-(1-&gt;4)]-N-acetyl-alpha-D-muramoyl-L-alanyl-D-glutamyl-meso-2,6-diaminopimeloyl-D-alanyl-D-alanine + UDP + H(+). The protein operates within cell wall biogenesis; peptidoglycan biosynthesis. In terms of biological role, cell wall formation. Catalyzes the transfer of a GlcNAc subunit on undecaprenyl-pyrophosphoryl-MurNAc-pentapeptide (lipid intermediate I) to form undecaprenyl-pyrophosphoryl-MurNAc-(pentapeptide)GlcNAc (lipid intermediate II). This Synechococcus sp. (strain RCC307) protein is UDP-N-acetylglucosamine--N-acetylmuramyl-(pentapeptide) pyrophosphoryl-undecaprenol N-acetylglucosamine transferase.